The following is a 92-amino-acid chain: CRISPR-associated endoribonuclease Cas2 (92 aa).

Residue D9 coordinates Mg(2+).

This sequence belongs to the CRISPR-associated endoribonuclease Cas2 protein family. As to quaternary structure, homodimer, forms a heterotetramer with a Cas1 homodimer. Mg(2+) serves as cofactor.

CRISPR (clustered regularly interspaced short palindromic repeat), is an adaptive immune system that provides protection against mobile genetic elements (viruses, transposable elements and conjugative plasmids). CRISPR clusters contain sequences complementary to antecedent mobile elements and target invading nucleic acids. CRISPR clusters are transcribed and processed into CRISPR RNA (crRNA). Functions as a ssRNA-specific endoribonuclease. Involved in the integration of spacer DNA into the CRISPR cassette. The chain is CRISPR-associated endoribonuclease Cas2 from Aeropyrum pernix (strain ATCC 700893 / DSM 11879 / JCM 9820 / NBRC 100138 / K1).